The following is an 816-amino-acid chain: H(+)/Cl(-) exchange transporter 5 (816 aa).

A disordered region spans residues 1-28; sequence MAMWQGAMDNRGFQQGSFNSFQSSSSDE. Residues 1-124 are Cytoplasmic-facing; the sequence is MAMWQGAMDN…WALIHSVSDA (124 aa). A compositionally biased stretch (low complexity) spans 12 to 25; the sequence is GFQQGSFNSFQSSS. The next 2 membrane-spanning stretches (helical) occupy residues 125-162 and 208-231; these read FSGW…ICTE and VNYF…VKVF. Positions 237-241 match the Selectivity filter part_1 motif; it reads GSGIP. Residue serine 238 coordinates chloride. An intramembrane region (helical) is located at residues 240 to 247; it reads IPEIKTIL. 2 helical membrane passes run 256–275 and 281–300; these read LGKW…VSSG and EGPL…HCFN. The short motif at 279-283 is the Selectivity filter part_2 element; that stretch reads GKEGP. Intramembrane regions (helical) lie at residues 312-324 and 328-336; these read VLSA…VSVA and PIGGVLFSL. The next 5 membrane-spanning stretches (helical) occupy residues 348–366, 389–414, 422–442, 498–518, and 523–542; these read LWRS…RSIN, LVPF…IAWC, LGKY…ILAF, MWQL…TFGM, and GLFI…LGVG. The short motif at 523 to 527 is the Selectivity filter part_3 element; it reads GLFIP. Phenylalanine 525 is a chloride binding site. Residues 570–584 constitute an intramembrane region (helical); the sequence is GLYAMVGAAACLGGV. The note=Loop between two helices intramembrane region spans 585-587; that stretch reads TRM. Positions 588–599 form an intramembrane region, helical; it reads TVSLVVIMFELT. Positions 600–604 form an intramembrane region, note=Loop between two helices; sequence GGLEY. The helical transmembrane segment at 605–622 threads the bilayer; that stretch reads IVPLMAAAMTSKWVADAL. Residues 623 to 816 are Cytoplasmic-facing; that stretch reads GREGIYDAHI…NQDPDSILFN (194 aa). Tyrosine 628 is a binding site for chloride. CBS domains lie at 656 to 720 and 752 to 812; these read MKPR…ARKK and ILDL…DPDS. ATP is bound by residues threonine 666, 687-689, and 794-797; these read YSG and TKKD.

The protein belongs to the chloride channel (TC 2.A.49) family. ClC-5/CLCN5 subfamily. As to quaternary structure, interacts with NEDD4 and NEDD4L. Post-translationally, ubiquitinated by NEDD4L in the presence of albumin; which promotes endocytosis and proteasomal degradation.

It is found in the golgi apparatus membrane. The protein localises to the endosome membrane. It localises to the cell membrane. The catalysed reaction is 2 chloride(in) + H(+)(out) = 2 chloride(out) + H(+)(in). Proton-coupled chloride transporter. Functions as antiport system and exchanges chloride ions against protons. Important for normal acidification of the endosome lumen. May play an important role in renal tubular function. The CLC channel family contains both chloride channels and proton-coupled anion transporters that exchange chloride or another anion for protons. The absence of conserved gating glutamate residues is typical for family members that function as channels. The sequence is that of H(+)/Cl(-) exchange transporter 5 (CLCN5) from Sus scrofa (Pig).